Here is a 410-residue protein sequence, read N- to C-terminus: Sprouty-related, EVH1 domain-containing protein 2 (410 aa).

A WH1 domain is found at 5 to 122 (THPDDDSYIV…RGVRKAIEDL (118 aa)). The interval 127–171 (TTSSSTIHNEAELGDDDVFTTATDSSSNSSQKREPNTRTISSPTS) is disordered. The segment covering 146 to 156 (TTATDSSSNSS) has biased composition (polar residues). Residues 197–252 (SYPQVTFPEDDEEIVRINPREKIWMTGYEDYRHAPVRGKYLDSTEDADSYVRFAKG) enclose the KBD domain. Phosphotyrosine occurs at positions 224 and 227. The interval 274–294 (DPKGNVIKTQPPRAKSRRRKE) is disordered. One can recognise an SPR domain in the interval 300-408 (RCVYCRDMFN…CRCCGGKHKA (109 aa)).

As to quaternary structure, homodimer and heterodimer. Able to interact with SPRED1 to form heterodimers. Interacts with RAS. May interact with ZDHHC13 (via ANK repeats) and ZDHHC17 (via ANK repeats). Interacts with TESK1. Interacts with NF1. Phosphorylated on serine and threonine residues. Phosphorylated on tyrosine. Phosphorylation of Tyr-224 and Tyr-227 are required for ubiquitination. In terms of processing, ubiquitinated; leading to degradation by the proteasome. As to expression, expressed in the eye, with higher expression in lens epithelium than in lens fiber cells at postnatal day 15.

Its subcellular location is the cell membrane. The protein localises to the cytoplasmic vesicle. It is found in the secretory vesicle membrane. It localises to the cytoplasm. Functionally, negatively regulates Ras signaling pathways and downstream activation of MAP kinases. Recruits and translocates NF1 to the cell membrane, thereby enabling NF1-dependent hydrolysis of active GTP-bound Ras to inactive GDP-bound Ras. Inhibits fibroblast growth factor (FGF)-induced retinal lens fiber differentiation, probably by inhibiting FGF-mediated phosphorylation of ERK1/2. Inhibits TGFB-induced epithelial-to-mesenchymal transition in lens epithelial cells. This Rattus norvegicus (Rat) protein is Sprouty-related, EVH1 domain-containing protein 2 (Spred2).